A 514-amino-acid polypeptide reads, in one-letter code: 2,3-bisphosphoglycerate-independent phosphoglycerate mutase (514 aa).

Mn(2+) contacts are provided by aspartate 13 and serine 63. Serine 63 acts as the Phosphoserine intermediate in catalysis. Substrate-binding positions include histidine 124, 154–155 (RD), arginine 186, arginine 192, 258–261 (RADR), and lysine 332. The Mn(2+) site is built by aspartate 399, histidine 403, aspartate 440, histidine 441, and histidine 459.

It belongs to the BPG-independent phosphoglycerate mutase family. Monomer. Requires Mn(2+) as cofactor.

The catalysed reaction is (2R)-2-phosphoglycerate = (2R)-3-phosphoglycerate. The protein operates within carbohydrate degradation; glycolysis; pyruvate from D-glyceraldehyde 3-phosphate: step 3/5. Catalyzes the interconversion of 2-phosphoglycerate and 3-phosphoglycerate. The chain is 2,3-bisphosphoglycerate-independent phosphoglycerate mutase from Legionella pneumophila (strain Paris).